An 877-amino-acid chain; its full sequence is Phosphoenolpyruvate carboxylase (877 aa).

Residues His-137 and Lys-544 contribute to the active site.

It belongs to the PEPCase type 1 family. Requires Mg(2+) as cofactor.

The enzyme catalyses oxaloacetate + phosphate = phosphoenolpyruvate + hydrogencarbonate. Forms oxaloacetate, a four-carbon dicarboxylic acid source for the tricarboxylic acid cycle. The sequence is that of Phosphoenolpyruvate carboxylase from Edwardsiella ictaluri (strain 93-146).